Here is a 1689-residue protein sequence, read N- to C-terminus: DNA-directed RNA polymerase I subunit rpa1 (1689 aa).

Zn(2+) contacts are provided by cysteine 63, cysteine 66, cysteine 73, and histidine 76. 2 positions are modified to phosphoserine: serine 159 and serine 161. Residues 269–280 (VLRDTSKKHHED) are compositionally biased toward basic and acidic residues. The interval 269 to 295 (VLRDTSKKHHEDEGYDGDSDSSNESEV) is disordered. Acidic residues predominate over residues 281–295 (EGYDGDSDSSNESEV). Mg(2+)-binding residues include aspartate 643, aspartate 645, and aspartate 647. The tract at residues 1005–1017 (PQEYYFHCMAGRE) is bridging helix. A disordered region spans residues 1346 to 1440 (RKSGGKDDTV…EEDEGFKSDE (95 aa)). Residues serine 1438 and serine 1441 each carry the phosphoserine modification.

The protein belongs to the RNA polymerase beta' chain family. As to quaternary structure, component of the RNA polymerase I (Pol I) complex consisting of at least 13 subunits.

The protein resides in the nucleus. It is found in the nucleolus. The catalysed reaction is RNA(n) + a ribonucleoside 5'-triphosphate = RNA(n+1) + diphosphate. Functionally, DNA-dependent RNA polymerase catalyzes the transcription of DNA into RNA using the four ribonucleoside triphosphates as substrates. Largest and catalytic core component of RNA polymerase I which synthesizes ribosomal RNA precursors. Forms the polymerase active center together with the second largest subunit. A single stranded DNA template strand of the promoter is positioned within the central active site cleft of Pol I. A bridging helix emanates from RPA1 and crosses the cleft near the catalytic site and is thought to promote translocation of Pol I by acting as a ratchet that moves the RNA-DNA hybrid through the active site by switching from straight to bent conformations at each step of nucleotide addition. The protein is DNA-directed RNA polymerase I subunit rpa1 (rpa1) of Schizosaccharomyces pombe (strain 972 / ATCC 24843) (Fission yeast).